The chain runs to 585 residues: Rhizobactin siderophore biosynthesis protein RhbC (585 aa).

Belongs to the IucA/IucC family.

The protein operates within siderophore biosynthesis; rhizobactin biosynthesis. In Rhizobium meliloti (strain 1021) (Ensifer meliloti), this protein is Rhizobactin siderophore biosynthesis protein RhbC (rhbC).